The sequence spans 335 residues: N-lysine methyltransferase KMT5A-A (335 aa).

Disordered stretches follow at residues 1–91 and 133–183; these read MGRG…EVEK and LPPE…EIES. The span at 67-91 shows a compositional bias: basic and acidic residues; sequence SVTHHESKCLGKPSTETRKKAEVEK. A compositionally biased stretch (basic residues) spans 145 to 161; the sequence is VKNKPLRKKTQRQKSPN. An SET domain is found at 199-320; sequence EGIKMHMITG…VGEELLYDYG (122 aa). Residues 209–211, Y254, and 281–282 each bind S-adenosyl-L-methionine; these read KGR and NH.

It belongs to the class V-like SAM-binding methyltransferase superfamily. Histone-lysine methyltransferase family. PR/SET subfamily.

It is found in the nucleus. It localises to the chromosome. The catalysed reaction is L-lysyl(20)-[histone H4] + S-adenosyl-L-methionine = N(6)-methyl-L-lysyl(20)-[histone H4] + S-adenosyl-L-homocysteine + H(+). The enzyme catalyses L-lysyl-[protein] + S-adenosyl-L-methionine = N(6)-methyl-L-lysyl-[protein] + S-adenosyl-L-homocysteine + H(+). Functionally, protein-lysine N-methyltransferase that monomethylates both histones and non-histone proteins. Specifically monomethylates 'Lys-20' of histone H4 (H4K20me1). H4K20me1 is enriched during mitosis and represents a specific tag for epigenetic transcriptional repression. Mainly functions in euchromatin regions, thereby playing a central role in the silencing of euchromatic genes. Required for cell proliferation, probably by contributing to the maintenance of proper higher-order structure of DNA during mitosis. Involved in chromosome condensation and proper cytokinesis. The polypeptide is N-lysine methyltransferase KMT5A-A (Xenopus laevis (African clawed frog)).